The following is a 542-amino-acid chain: uncharacterized protein (542 aa).

The next 5 helical transmembrane spans lie at 4-23, 28-47, 57-79, 86-108, and 151-173; these read ILRDNPLLLLFIVAGIGYPL, IGGIHLGVAAVLFVGLAFGA, IVYQFGLALFVYCVGLSSGHGFL, GVIYNLLTLGVILLAAALLLIPH, and PVVGYSIAYPASVLGVILAIYLA. RCK C-terminal domains are found at residues 186–270 and 273–356; these read RTLK…VIGC and EVQA…LGDS. Transmembrane regions (helical) follow at residues 365-384, 389-408, 415-437, 457-479, 484-506, and 519-541; these read IAVLGLGMALGIGLGLVPIP, ITVRLGLAGGPLIVALFLGA, LVWVLPYSANMLLRQMGLTIFLA, WAILGASAAIIVLLSWVMLYVGY, IPMGLLTGMVAGMQTQSATLGFA, and YAMVYPMAMVVKIVLAPVIIAVL.

The protein belongs to the AAE transporter (TC 2.A.81) family.

It localises to the cell membrane. This is an uncharacterized protein from Symbiobacterium thermophilum (strain DSM 24528 / JCM 14929 / IAM 14863 / T).